The primary structure comprises 102 residues: Large ribosomal subunit protein bL21 (102 aa).

It belongs to the bacterial ribosomal protein bL21 family. In terms of assembly, part of the 50S ribosomal subunit. Contacts protein L20.

Functionally, this protein binds to 23S rRNA in the presence of protein L20. This Macrococcus caseolyticus (strain JCSC5402) (Macrococcoides caseolyticum) protein is Large ribosomal subunit protein bL21.